Here is a 194-residue protein sequence, read N- to C-terminus: Small ribosomal subunit protein eS7 (194 aa).

It belongs to the eukaryotic ribosomal protein eS7 family.

The sequence is that of Small ribosomal subunit protein eS7 (rps-7) from Caenorhabditis elegans.